We begin with the raw amino-acid sequence, 602 residues long: MGQIHGLSPTPIPKAPRGLSTHHWLNFLQAAYRLQPRPSDFDFQQLRRFLKLALKTPIWLNPIDYSLLASLIPKGYPGRVVEIINILVKNQVSPSAPAAPVPTPICPTTTPPPPPPPSPEAHVPPPYVEPTTTQCFPILHPPGAPSAHRPWQMKDLQAIKQEVSSSALGSPQFMQTLRLAVQQFDPTAKDLQDLLQYLCSSLVVSLHHQQLNTLITEAETRGMTGYNPMAGPLRMQANNPAQQGLRREYQNLWLAAFSTLPGNTRDPSWAAILQGLEEPYCAFVERLNVALDNGLPEGTPKEPILRSLAYSNANKECQKILQARGHTNSPLGEMLRTCQAWTPKDKTKVLVVQPRRPPPTQPCFRCGKVGHWSRDCTQPRPPPGPCPLCQDPSHWKRDCPQLKPPQEEGEPLLLDLPSTSGTTEEKNLLKGGDLISPHPDQDISILPLIPLRQQQQPILGVRISVMGQTPQPTQALLDTGADLTVIPQTLVPGPVKLHDTLILGASGQTNTQFKLLQTPLHIFLPFRRSPVILSSCLLDTHNKWTIIGRDALQQCQGLLYLPDDPSPHQLLPIATPNTIGLEHLPPPPQVDQFPLNLSASRP.

Glycine 2 is lipidated: N-myristoyl glycine; by host. Residues 94–97 (PSAP) carry the PTAP/PSAP motif motif. The interval 94–121 (PSAPAAPVPTPICPTTTPPPPPPPSPEA) is disordered. The span at 97–121 (PAAPVPTPICPTTTPPPPPPPSPEA) shows a compositional bias: pro residues. The PPXY motif signature appears at 124-127 (PPPY). CCHC-type zinc fingers lie at residues 361–378 (QPCFRCGKVGHWSRDCTQ) and 384–401 (GPCPLCQDPSHWKRDCPQ). The tract at residues 399–425 (CPQLKPPQEEGEPLLLDLPSTSGTTEE) is disordered. Positions 473–551 (TQALLDTGAD…NKWTIIGRDA (79 aa)) constitute a Peptidase A2 domain. The active-site Protease; shared with dimeric partner is the aspartate 478. The tract at residues 582–602 (EHLPPPPQVDQFPLNLSASRP) is disordered.

In terms of assembly, homodimer; the homodimers are part of the immature particles. Interacts with human TSG101 and NEDD4; these interactions are essential for budding and release of viral particles. Homodimer; further assembles as homohexamers. Post-translationally, specific enzymatic cleavages by the viral protease yield mature proteins. The polyprotein is cleaved during and after budding, this process is termed maturation. The protease is autoproteolytically processed at its N- and C-termini. Phosphorylation of the matrix protein p19 by MAPK1 seems to play a role in budding. In terms of processing, myristoylated. Myristoylation of the matrix (MA) domain mediates the transport and binding of Gag polyproteins to the host plasma membrane and is required for the assembly of viral particles.

The protein resides in the virion. In terms of biological role, the matrix domain targets Gag, Gag-Pro and Gag-Pro-Pol polyproteins to the plasma membrane via a multipartite membrane binding signal, that includes its myristoylated N-terminus. Its function is as follows. Matrix protein. Forms the spherical core of the virus that encapsulates the genomic RNA-nucleocapsid complex. Functionally, binds strongly to viral nucleic acids and promote their aggregation. Also destabilizes the nucleic acids duplexes via highly structured zinc-binding motifs. In terms of biological role, the aspartyl protease mediates proteolytic cleavages of Gag and Gag-Pol polyproteins during or shortly after the release of the virion from the plasma membrane. Cleavages take place as an ordered, step-wise cascade to yield mature proteins. This process is called maturation. Displays maximal activity during the budding process just prior to particle release from the cell (Potential). Cleaves the translation initiation factor eIF4G leading to the inhibition of host cap-dependent translation. The polypeptide is Gag-Pro polyprotein (gag-pro) (Homo sapiens (Human)).